Consider the following 955-residue polypeptide: E3 ubiquitin-protein ligase MIB2 (955 aa).

Methionine 1 carries the N-acetylmethionine modification. An MIB/HERC2 1 domain is found at 1-80 (MDPDPQAGVQ…AHDLLLYDNA (80 aa)). Residues 86–138 (HPNIICDCCKKHGLRGMRWKCRVCLDYDLCTQCYMHNKHELAHAFDRYETAHS) form a ZZ-type zinc finger. 8 residues coordinate Zn(2+): cysteine 91, cysteine 94, cysteine 106, cysteine 109, cysteine 115, cysteine 118, histidine 124, and histidine 128. An MIB/HERC2 2 domain is found at 149 to 227 (LPRIPLRGIF…KVDLKCVGEA (79 aa)). Phosphoserine is present on serine 251. 9 ANK repeats span residues 464–493 (QGRT…GVDL), 497–526 (EGNT…RADA), 530–559 (TQST…DVNL), 563–595 (HSDT…DVTA), 599–628 (QGFT…QLVD), 633–663 (DGFT…DVNV), 667–696 (KLQS…SVNA), 700–728 (EGDT…DPGP), and 769–798 (RGRS…ERQA). 2 RING-type zinc fingers span residues 832 to 867 (CLVC…IRCQ) and 911 to 944 (CPIC…PICR).

As to quaternary structure, interacts with actin monomer. In terms of processing, ubiquitinated. Possibly via autoubiquitination. As to expression, expressed in skeletal muscle, and to a lesser extent in heart, brain and kidney.

The protein localises to the cytoplasm. It localises to the endosome. The catalysed reaction is S-ubiquitinyl-[E2 ubiquitin-conjugating enzyme]-L-cysteine + [acceptor protein]-L-lysine = [E2 ubiquitin-conjugating enzyme]-L-cysteine + N(6)-ubiquitinyl-[acceptor protein]-L-lysine.. It participates in protein modification; protein ubiquitination. In terms of biological role, E3 ubiquitin-protein ligase that mediates ubiquitination of Delta receptors, which act as ligands of Notch proteins. Positively regulates the Delta-mediated Notch signaling by ubiquitinating the intracellular domain of Delta, leading to endocytosis of Delta receptors. This is E3 ubiquitin-protein ligase MIB2 from Homo sapiens (Human).